Reading from the N-terminus, the 304-residue chain is Quinolinate synthase (304 aa).

Iminosuccinate-binding residues include H24 and S41. C86 lines the [4Fe-4S] cluster pocket. Residues 112–114 (YVN) and S129 each bind iminosuccinate. C171 provides a ligand contact to [4Fe-4S] cluster. Iminosuccinate is bound by residues 197–199 (HPE) and T214. Residue C259 coordinates [4Fe-4S] cluster.

The protein belongs to the quinolinate synthase family. Type 2 subfamily. It depends on [4Fe-4S] cluster as a cofactor.

It localises to the cytoplasm. It catalyses the reaction iminosuccinate + dihydroxyacetone phosphate = quinolinate + phosphate + 2 H2O + H(+). Its pathway is cofactor biosynthesis; NAD(+) biosynthesis; quinolinate from iminoaspartate: step 1/1. Its function is as follows. Catalyzes the condensation of iminoaspartate with dihydroxyacetone phosphate to form quinolinate. The sequence is that of Quinolinate synthase from Geotalea uraniireducens (strain Rf4) (Geobacter uraniireducens).